We begin with the raw amino-acid sequence, 549 residues long: Cytochrome c oxidase subunit 1 (549 aa).

A helical membrane pass occupies residues 18-38 (LCYLLVAILSGFVGYVYSLFI). The Ca(2+) site is built by Glu-41 and Gly-46. The helical transmembrane segment at 42–62 (LSLIGCGILFGDYQFYNVLIT) threads the bilayer. Position 64 (His-64) interacts with Fe(II)-heme a. The next 5 helical transmembrane spans lie at 66-86 (LIMV…NYFI), 100-120 (LNNM…NGFL), 148-168 (FVMF…INLL), 186-206 (LFIW…PVLA), and 222-242 (FYDV…WFFG). His-243 provides a ligand contact to Cu cation. A cross-link (1'-histidyl-3'-tyrosine (His-Tyr)) is located at residues 243-247 (HPEVY). The next 2 membrane-spanning stretches (helical) occupy residues 246–266 (VYII…VIGF) and 269–289 (VFST…GMFV). Tyr-247 lines the O2 pocket. Residues His-292 and His-293 each contribute to the Cu cation site. The next 2 membrane-spanning stretches (helical) occupy residues 306–326 (YFGG…FNWI) and 340–360 (VYFV…GLFL). 2 residues coordinate Mg(2+): His-370 and Asp-371. His-378 contacts heme a3. Transmembrane regions (helical) follow at residues 379–399 (FHYV…IHFL), 402–422 (WLPI…LFIG), 460–480 (MLLL…FLFW), 484–504 (LFFV…STWL), and 520–540 (IVLD…IFFW). His-380 lines the Fe(II)-heme a pocket.

It belongs to the heme-copper respiratory oxidase family. As to quaternary structure, component of the cytochrome c oxidase (complex IV, CIV), a multisubunit enzyme composed of a catalytic core of 3 subunits and several supernumerary subunits. The complex exists as a monomer or a dimer and forms supercomplexes (SCs) in the inner mitochondrial membrane with ubiquinol-cytochrome c oxidoreductase (cytochrome b-c1 complex, complex III, CIII). Requires heme as cofactor. Cu cation serves as cofactor.

Its subcellular location is the mitochondrion inner membrane. The enzyme catalyses 4 Fe(II)-[cytochrome c] + O2 + 8 H(+)(in) = 4 Fe(III)-[cytochrome c] + 2 H2O + 4 H(+)(out). Its pathway is energy metabolism; oxidative phosphorylation. Its function is as follows. Component of the cytochrome c oxidase, the last enzyme in the mitochondrial electron transport chain which drives oxidative phosphorylation. The respiratory chain contains 3 multisubunit complexes succinate dehydrogenase (complex II, CII), ubiquinol-cytochrome c oxidoreductase (cytochrome b-c1 complex, complex III, CIII) and cytochrome c oxidase (complex IV, CIV), that cooperate to transfer electrons derived from NADH and succinate to molecular oxygen, creating an electrochemical gradient over the inner membrane that drives transmembrane transport and the ATP synthase. Cytochrome c oxidase is the component of the respiratory chain that catalyzes the reduction of oxygen to water. Electrons originating from reduced cytochrome c in the intermembrane space (IMS) are transferred via the dinuclear copper A center (CU(A)) of subunit 2 and heme A of subunit 1 to the active site in subunit 1, a binuclear center (BNC) formed by heme A3 and copper B (CU(B)). The BNC reduces molecular oxygen to 2 water molecules using 4 electrons from cytochrome c in the IMS and 4 protons from the mitochondrial matrix. The polypeptide is Cytochrome c oxidase subunit 1 (COI) (Leishmania tarentolae (Sauroleishmania tarentolae)).